Reading from the N-terminus, the 608-residue chain is UvrABC system protein C (608 aa).

Positions 15 to 93 constitute a GIY-YIG domain; it reads HQPGVYRMYN…IKQYLPKYNV (79 aa). Residues 203–238 enclose the UVR domain; the sequence is RQVIQSLVEQMEGASQALNFEKAATIRDQIQSMRRV.

The protein belongs to the UvrC family. Interacts with UvrB in an incision complex.

The protein resides in the cytoplasm. Its function is as follows. The UvrABC repair system catalyzes the recognition and processing of DNA lesions. UvrC both incises the 5' and 3' sides of the lesion. The N-terminal half is responsible for the 3' incision and the C-terminal half is responsible for the 5' incision. The polypeptide is UvrABC system protein C (Aliivibrio salmonicida (strain LFI1238) (Vibrio salmonicida (strain LFI1238))).